A 316-amino-acid chain; its full sequence is Beta-ketoacyl-[acyl-carrier-protein] synthase III (316 aa).

Residues Cys-112 and His-243 contribute to the active site. Residues 244–248 form an ACP-binding region; sequence QANIR. Asn-273 is a catalytic residue.

The protein belongs to the thiolase-like superfamily. FabH family. As to quaternary structure, homodimer.

It is found in the cytoplasm. The catalysed reaction is malonyl-[ACP] + acetyl-CoA + H(+) = 3-oxobutanoyl-[ACP] + CO2 + CoA. The protein operates within lipid metabolism; fatty acid biosynthesis. In terms of biological role, catalyzes the condensation reaction of fatty acid synthesis by the addition to an acyl acceptor of two carbons from malonyl-ACP. Catalyzes the first condensation reaction which initiates fatty acid synthesis and may therefore play a role in governing the total rate of fatty acid production. Possesses both acetoacetyl-ACP synthase and acetyl transacylase activities. Its substrate specificity determines the biosynthesis of branched-chain and/or straight-chain of fatty acids. This is Beta-ketoacyl-[acyl-carrier-protein] synthase III from Actinobacillus pleuropneumoniae serotype 5b (strain L20).